A 510-amino-acid polypeptide reads, in one-letter code: Lysine--tRNA ligase (510 aa).

Positions 420 and 427 each coordinate Mg(2+).

The protein belongs to the class-II aminoacyl-tRNA synthetase family. As to quaternary structure, homodimer. Mg(2+) serves as cofactor.

It localises to the cytoplasm. It carries out the reaction tRNA(Lys) + L-lysine + ATP = L-lysyl-tRNA(Lys) + AMP + diphosphate. This Vibrio campbellii (strain ATCC BAA-1116) protein is Lysine--tRNA ligase.